A 538-amino-acid chain; its full sequence is RNA-binding protein Ro60 (538 aa).

An N-acetylmethionine modification is found at Met-1. Phosphoserine is present on residues Ser-4 and Ser-19. Residues 16–369 (VVNSEGGCVW…TFKTVEPTGK (354 aa)) enclose the TROVE domain. The RNA-binding stretch occupies residues 120 to 284 (RIPTHLFTFI…EMPLTALLRN (165 aa)). Lys-224 bears the N6-acetyllysine mark. The segment at 361–538 (FKTVEPTGKR…VIRNFTLDVI (178 aa)) is VWFA-like domain. Positions 378, 380, and 445 each coordinate a divalent metal cation.

It belongs to the Ro 60 kDa family. Identified in a IGF2BP1-dependent mRNP granule complex containing untranslated mRNAs. Found in a complex with PUF60 and Y5 RNA. Interacts with RAB11FIP5. In terms of tissue distribution, highest in brain, followed by lung, muscle, kidney and heart. Lower levels are found in testis, liver and spleen.

The protein resides in the cytoplasm. RNA-binding protein that binds to misfolded non-coding RNAs, pre-5S rRNA, and several small cytoplasmic RNA molecules known as Y RNAs. May play roles in cilia formation and/or maintenance. This Mus musculus (Mouse) protein is RNA-binding protein Ro60.